The primary structure comprises 370 residues: Small ribosomal subunit biogenesis GTPase RsgA (370 aa).

Positions 97–255 (QTQLDRPPIA…LADTPGFNQP (159 aa)) constitute a CP-type G domain. GTP is bound by residues 146–149 (NKSD) and 197–205 (GPSGVGKSS). Zn(2+)-binding residues include cysteine 280, cysteine 285, histidine 287, and cysteine 293. Residues 328 to 370 (TLKLKTKGKGQSQYEPKLESKKYRRTSRRTQVQGLQDLYQEEE) form a disordered region.

It belongs to the TRAFAC class YlqF/YawG GTPase family. RsgA subfamily. Monomer. Associates with 30S ribosomal subunit, binds 16S rRNA. Requires Zn(2+) as cofactor.

It localises to the cytoplasm. Functionally, one of several proteins that assist in the late maturation steps of the functional core of the 30S ribosomal subunit. Helps release RbfA from mature subunits. May play a role in the assembly of ribosomal proteins into the subunit. Circularly permuted GTPase that catalyzes slow GTP hydrolysis, GTPase activity is stimulated by the 30S ribosomal subunit. This is Small ribosomal subunit biogenesis GTPase RsgA from Trichormus variabilis (strain ATCC 29413 / PCC 7937) (Anabaena variabilis).